A 197-amino-acid chain; its full sequence is Probable molybdenum cofactor guanylyltransferase (197 aa).

Residues 10–12 (LCG), lysine 22, aspartate 73, and aspartate 102 contribute to the GTP site. Mg(2+) is bound at residue aspartate 102.

This sequence belongs to the MobA family. The cofactor is Mg(2+).

The protein resides in the cytoplasm. It carries out the reaction Mo-molybdopterin + GTP + H(+) = Mo-molybdopterin guanine dinucleotide + diphosphate. Transfers a GMP moiety from GTP to Mo-molybdopterin (Mo-MPT) cofactor (Moco or molybdenum cofactor) to form Mo-molybdopterin guanine dinucleotide (Mo-MGD) cofactor. The chain is Probable molybdenum cofactor guanylyltransferase from Methanothermobacter thermautotrophicus (strain ATCC 29096 / DSM 1053 / JCM 10044 / NBRC 100330 / Delta H) (Methanobacterium thermoautotrophicum).